Reading from the N-terminus, the 288-residue chain is Polyamine aminopropyltransferase (288 aa).

Residues 9–238 enclose the PABS domain; it reads ETLHDQFGQY…GIMTFAWATD (230 aa). Glutamine 33 is an S-methyl-5'-thioadenosine binding site. 2 residues coordinate spermidine: histidine 64 and aspartate 88. S-methyl-5'-thioadenosine is bound by residues glutamate 108 and 140–141; that span reads DG. The active-site Proton acceptor is the aspartate 158. 158 to 161 is a spermidine binding site; that stretch reads DCTD. An S-methyl-5'-thioadenosine-binding site is contributed by proline 165.

This sequence belongs to the spermidine/spermine synthase family. Homodimer or homotetramer.

It localises to the cytoplasm. The catalysed reaction is S-adenosyl 3-(methylsulfanyl)propylamine + putrescine = S-methyl-5'-thioadenosine + spermidine + H(+). Its pathway is amine and polyamine biosynthesis; spermidine biosynthesis; spermidine from putrescine: step 1/1. Its function is as follows. Catalyzes the irreversible transfer of a propylamine group from the amino donor S-adenosylmethioninamine (decarboxy-AdoMet) to putrescine (1,4-diaminobutane) to yield spermidine. The protein is Polyamine aminopropyltransferase of Escherichia coli (strain UTI89 / UPEC).